Here is a 406-residue protein sequence, read N- to C-terminus: Probable 4-hydroxyphenylpyruvate dioxygenase 2 (406 aa).

2 consecutive VOC domains span residues 22 to 174 and 205 to 363; these read GFDH…LINR and EIDH…IFSK. Fe cation is bound by residues His208, His291, and Glu374.

Belongs to the 4HPPD family. The cofactor is Fe cation.

It catalyses the reaction 3-(4-hydroxyphenyl)pyruvate + O2 = homogentisate + CO2. It functions in the pathway amino-acid degradation; L-phenylalanine degradation; acetoacetate and fumarate from L-phenylalanine: step 3/6. This Aspergillus fumigatus (strain ATCC MYA-4609 / CBS 101355 / FGSC A1100 / Af293) (Neosartorya fumigata) protein is Probable 4-hydroxyphenylpyruvate dioxygenase 2.